Consider the following 541-residue polypeptide: DNA ligase 1 (541 aa).

E234 is a binding site for ATP. K236 functions as the N6-AMP-lysine intermediate in the catalytic mechanism. 6 residues coordinate ATP: R241, R256, E286, F325, R398, and K404.

It belongs to the ATP-dependent DNA ligase family. Requires Mg(2+) as cofactor.

It carries out the reaction ATP + (deoxyribonucleotide)n-3'-hydroxyl + 5'-phospho-(deoxyribonucleotide)m = (deoxyribonucleotide)n+m + AMP + diphosphate.. DNA ligase that seals nicks in double-stranded DNA during DNA replication, DNA recombination and DNA repair. The sequence is that of DNA ligase 1 from Korarchaeum cryptofilum (strain OPF8).